The primary structure comprises 61 residues: Small ribosomal subunit protein uS14 (61 aa).

Zn(2+)-binding residues include Cys24, Cys27, Cys40, and Cys43.

It belongs to the universal ribosomal protein uS14 family. Zinc-binding uS14 subfamily. Part of the 30S ribosomal subunit. Contacts proteins S3 and S10. It depends on Zn(2+) as a cofactor.

Binds 16S rRNA, required for the assembly of 30S particles and may also be responsible for determining the conformation of the 16S rRNA at the A site. This is Small ribosomal subunit protein uS14 from Mycoplasma genitalium (strain ATCC 33530 / DSM 19775 / NCTC 10195 / G37) (Mycoplasmoides genitalium).